An 82-amino-acid chain; its full sequence is Penaeidin-3i (82 aa).

Positions 1-19 (MRLVVCLVFLASFALVCQG) are cleaved as a signal peptide. Position 20 is a pyrrolidone carboxylic acid (Gln20). 2 disulfide bridges follow: Cys55–Cys73 and Cys67–Cys74. Ser81 carries the serine amide modification.

Belongs to the penaeidin family.

It localises to the cytoplasmic granule. Antibacterial and antifungal activity. Presents chitin-binding activity. The chain is Penaeidin-3i from Penaeus vannamei (Whiteleg shrimp).